The chain runs to 520 residues: Ubiquitin carboxyl-terminal hydrolase 3 (520 aa).

At methionine 1 the chain carries N-acetylmethionine. A UBP-type zinc finger spans residues 1 to 121 (MECPHLSSSV…QKVREHLQNL (121 aa)). 12 residues coordinate Zn(2+): cysteine 3, histidine 5, cysteine 29, cysteine 32, cysteine 41, cysteine 44, cysteine 49, histidine 56, histidine 60, histidine 82, cysteine 95, and cysteine 98. The USP domain occupies 159-511 (TGLRNLGNTC…KAYILFYVEH (353 aa)). Catalysis depends on cysteine 168, which acts as the Nucleophile. The Proton acceptor role is filled by histidine 471.

The protein belongs to the peptidase C19 family. USP3 subfamily. In terms of assembly, interacts (via UBP-type domain) with H2A; the interaction is less efficient than with monoubiquitinated H2A. As to expression, expressed in all tissues examined, with strongest expression in pancreas.

The protein localises to the nucleus. It localises to the cytoplasm. It catalyses the reaction Thiol-dependent hydrolysis of ester, thioester, amide, peptide and isopeptide bonds formed by the C-terminal Gly of ubiquitin (a 76-residue protein attached to proteins as an intracellular targeting signal).. Deubiquitinase that plays a role in several cellular processes including transcriptional regulation, cell cycle progression or innate immunity. In response to DNA damage, deubiquitinates monoubiquitinated target proteins such as histone H2A and H2AX and thereby counteracts RNF168- and RNF8-mediated ubiquitination. In turn, participates in the recruitment of DNA damage repair factors to DNA break sites. Required for proper progression through S phase and subsequent mitotic entry. Acts as a positive regulator of TP53 by deubiquitinating and stabilizing it to promote normal cell proliferation and transformation. Participates in establishing tolerance innate immune memory through non-transcriptional feedback. Mechanistically, negatively regulates TLR-induced NF-kappa-B signaling by targeting and removing the 'Lys-63'-linked polyubiquitin chains on MYD88. Negatively regulates the activation of type I interferon signaling by mediating 'Lys-63'-linked polyubiquitin chains on RIGI and IFIH1. Also deubiquinates ASC/PYCARD, the central adapter mediating the assembly and activation of most inflammasomes, and thereby promotes inflammasome activation. The polypeptide is Ubiquitin carboxyl-terminal hydrolase 3 (USP3) (Homo sapiens (Human)).